We begin with the raw amino-acid sequence, 455 residues long: Epoxide hydrolase 1 (455 aa).

A helical; Signal-anchor for type III membrane protein membrane pass occupies residues 1-21 (MWLEILLTSVLGFAIYWFISR). The Cytoplasmic segment spans residues 22–455 (DKEETLPLED…RKFLSVLERQ (434 aa)). D226 serves as the catalytic Nucleophile. R295 bears the Dimethylated arginine mark. The Proton donor role is filled by Y374. H431 (proton acceptor) is an active-site residue.

The protein belongs to the peptidase S33 family. As to expression, found in liver.

Its subcellular location is the microsome membrane. It localises to the endoplasmic reticulum membrane. The enzyme catalyses cis-stilbene oxide + H2O = (1R,2R)-hydrobenzoin. It catalyses the reaction 1-(4-methoxyphenyl)-N-methyl-N-[(3-methyloxetan-3-yl)methyl]methanamine + H2O = 2-{[(4-methoxybenzyl)(methyl)amino]methyl}-2-methylpropane-1,3-diol. The catalysed reaction is 8,9-epoxy-(5Z,11Z,14Z)-eicosatrienoate + H2O = 8,9-dihydroxy-(5Z,11Z,14Z)-eicosatrienoate. It carries out the reaction 11,12-epoxy-(5Z,8Z,14Z)-eicosatrienoate + H2O = 11,12-dihydroxy-(5Z,8Z,14Z)-eicosatrienoate. The enzyme catalyses 2-(5Z,8Z,11Z,14Z-eicosatetraenoyl)-glycerol + H2O = glycerol + (5Z,8Z,11Z,14Z)-eicosatetraenoate + H(+). Its activity is regulated as follows. Inhibited by 10-hydroxystearamide and methoxy-arachidonyl fluorophosphate. Functionally, biotransformation enzyme that catalyzes the hydrolysis of arene and aliphatic epoxides to less reactive and more water soluble dihydrodiols by the trans addition of water. Plays a role in the metabolism of endogenous lipids such as epoxide-containing fatty acids. Metabolizes the abundant endocannabinoid 2-arachidonoylglycerol (2-AG) to free arachidonic acid (AA) and glycerol. Binds 20(S)-hydroxycholesterol (20(S)-OHC). This is Epoxide hydrolase 1 from Homo sapiens (Human).